A 328-amino-acid polypeptide reads, in one-letter code: Phosphate acyltransferase (328 aa).

This sequence belongs to the PlsX family. As to quaternary structure, homodimer. Probably interacts with PlsY.

It is found in the cytoplasm. It carries out the reaction a fatty acyl-[ACP] + phosphate = an acyl phosphate + holo-[ACP]. The protein operates within lipid metabolism; phospholipid metabolism. In terms of biological role, catalyzes the reversible formation of acyl-phosphate (acyl-PO(4)) from acyl-[acyl-carrier-protein] (acyl-ACP). This enzyme utilizes acyl-ACP as fatty acyl donor, but not acyl-CoA. The chain is Phosphate acyltransferase from Staphylococcus aureus (strain Mu3 / ATCC 700698).